The chain runs to 403 residues: Pyruvate, phosphate dikinase regulatory protein 1, chloroplastic (403 aa).

Residues 1 to 86 (MALLSAMKLQ…NTTGPMRPIE (86 aa)) constitute a chloroplast transit peptide. Residues 1–108 (MALLSAMKLQ…DVSSSSNGVS (108 aa)) are disordered. Low complexity-rich tracts occupy residues 17-26 (SSNLNPNSKP), 69-80 (STITNGSNNTTG), and 87-108 (SSSR…NGVS). 269-276 (GVSRTGKT) is an ADP binding site.

Belongs to the pyruvate, phosphate/water dikinase regulatory protein family. PDRP subfamily. Interacts with PPDK1. As to expression, expressed in green tissues.

The protein localises to the plastid. It localises to the chloroplast stroma. It carries out the reaction N(tele)-phospho-L-histidyl/L-threonyl-[pyruvate, phosphate dikinase] + ADP = N(tele)-phospho-L-histidyl/O-phospho-L-threonyl-[pyruvate, phosphate dikinase] + AMP + H(+). The enzyme catalyses N(tele)-phospho-L-histidyl/O-phospho-L-threonyl-[pyruvate, phosphate dikinase] + phosphate + H(+) = N(tele)-phospho-L-histidyl/L-threonyl-[pyruvate, phosphate dikinase] + diphosphate. Regulated by light/dark exposure. In terms of biological role, bifunctional serine/threonine kinase and phosphorylase involved in the dark/light-mediated regulation of PPDK by catalyzing its phosphorylation/dephosphorylation. Dark/light-induced changes in stromal concentrations of the competing ADP and Pi substrates govern the direction of the reaction. In the dark, phosphorylates the catalytic intermediate of PPDK (PPDK-HisP), inactivating it. Light exposure induces the phosphorolysis reaction that reactivates PPDK. Unlike the kinase function which can utilize either Thr or Ser as target, the phosphorylase function has a strict substrate requirement for threonyl phosphate. This chain is Pyruvate, phosphate dikinase regulatory protein 1, chloroplastic (RP1), found in Arabidopsis thaliana (Mouse-ear cress).